A 380-amino-acid chain; its full sequence is Chaperone protein DnaJ (380 aa).

One can recognise a J domain in the interval 5-70 (DYYEVLGLQK…EKRAAYDQYG (66 aa)). The segment at 136-214 (GCKKDIRIST…CHGDGRVQKA (79 aa)) adopts a CR-type zinc-finger fold. Residues Cys-149, Cys-152, Cys-166, Cys-169, Cys-188, Cys-191, Cys-202, and Cys-205 each contribute to the Zn(2+) site. 4 CXXCXGXG motif repeats span residues 149 to 156 (CDTCHGSG), 166 to 173 (CSHCHGSG), 188 to 195 (CPSCHGSG), and 202 to 209 (CKSCHGDG).

Belongs to the DnaJ family. Homodimer. Zn(2+) is required as a cofactor.

The protein localises to the cytoplasm. Functionally, participates actively in the response to hyperosmotic and heat shock by preventing the aggregation of stress-denatured proteins and by disaggregating proteins, also in an autonomous, DnaK-independent fashion. Unfolded proteins bind initially to DnaJ; upon interaction with the DnaJ-bound protein, DnaK hydrolyzes its bound ATP, resulting in the formation of a stable complex. GrpE releases ADP from DnaK; ATP binding to DnaK triggers the release of the substrate protein, thus completing the reaction cycle. Several rounds of ATP-dependent interactions between DnaJ, DnaK and GrpE are required for fully efficient folding. Also involved, together with DnaK and GrpE, in the DNA replication of plasmids through activation of initiation proteins. The sequence is that of Chaperone protein DnaJ from Actinobacillus pleuropneumoniae serotype 5b (strain L20).